Consider the following 135-residue polypeptide: Protein PsiE homolog (135 aa).

4 helical membrane passes run Val-20 to Leu-40, Tyr-54 to Val-74, His-82 to Val-102, and Pro-107 to Ala-127.

It belongs to the PsiE family.

The protein resides in the cell inner membrane. The sequence is that of Protein PsiE homolog from Yersinia enterocolitica serotype O:8 / biotype 1B (strain NCTC 13174 / 8081).